The following is a 116-amino-acid chain: Large ribosomal subunit protein bL19 (116 aa).

The protein belongs to the bacterial ribosomal protein bL19 family.

This protein is located at the 30S-50S ribosomal subunit interface and may play a role in the structure and function of the aminoacyl-tRNA binding site. This is Large ribosomal subunit protein bL19 (rplS) from Geobacillus stearothermophilus (Bacillus stearothermophilus).